Consider the following 181-residue polypeptide: Ankyrin repeat-containing protein YGL242C (181 aa).

Methionine 1 carries the post-translational modification N-acetylmethionine. ANK repeat units lie at residues 49–78 (LGNT…EIEI) and 85–120 (DGDT…DPRV). Residues 151–181 (IDSTNGSGDNNEDGEMIDDGPSDDDEEDDKK) are disordered. A compositionally biased stretch (acidic residues) spans 160 to 181 (NNEDGEMIDDGPSDDDEEDDKK). Residue serine 172 is modified to Phosphoserine.

The polypeptide is Ankyrin repeat-containing protein YGL242C (Saccharomyces cerevisiae (strain ATCC 204508 / S288c) (Baker's yeast)).